The primary structure comprises 394 residues: Elongation factor Tu 2 (394 aa).

One can recognise a tr-type G domain in the interval 10–204 (KPHVNVGTIG…FLDSYIPEPE (195 aa)). Positions 19–26 (GHVDHGKT) are G1. Position 19–26 (19–26 (GHVDHGKT)) interacts with GTP. Thr-26 lines the Mg(2+) pocket. Residues 60 to 64 (GITIN) are G2. Positions 81–84 (DCPG) are G3. GTP is bound by residues 81 to 85 (DCPGH) and 136 to 139 (NKCD). Positions 136 to 139 (NKCD) are G4. The interval 174 to 176 (SAL) is G5.

It belongs to the TRAFAC class translation factor GTPase superfamily. Classic translation factor GTPase family. EF-Tu/EF-1A subfamily. As to quaternary structure, monomer.

The protein localises to the cytoplasm. The catalysed reaction is GTP + H2O = GDP + phosphate + H(+). In terms of biological role, GTP hydrolase that promotes the GTP-dependent binding of aminoacyl-tRNA to the A-site of ribosomes during protein biosynthesis. This Shigella flexneri serotype 5b (strain 8401) protein is Elongation factor Tu 2.